An 807-amino-acid chain; its full sequence is F-box protein YLR352W (807 aa).

An F-box domain is found at 220–266; sequence LNDCIDLPSHVLWKILKMLPELQKLDLSHTSIDDSTLYHGIPHWKNL. Residues 607-616 are compositionally biased toward basic and acidic residues; sequence DNNSHVEDSQ. Disordered regions lie at residues 607 to 647 and 716 to 739; these read DNNS…NPFA and HLFE…EHSS. Composition is skewed to polar residues over residues 627 to 644 and 723 to 736; these read SLLS…SSAN and SRSG…LTGE.

Interacts with SKP1 and CDC53. Component of the probable SCF(YBR352W) complex containing CDC53, SKP1, RBX1 and YBR352W.

It functions in the pathway protein modification; protein ubiquitination. Functionally, substrate recognition component of a SCF (SKP1-CUL1-F-box protein) E3 ubiquitin-protein ligase complex which mediates the ubiquitination and subsequent proteasomal degradation of target proteins. Probably recognizes and binds to phosphorylated target proteins. The sequence is that of F-box protein YLR352W from Saccharomyces cerevisiae (strain ATCC 204508 / S288c) (Baker's yeast).